The primary structure comprises 164 residues: Cell division protein SepF (164 aa).

The disordered stretch occupies residues 21–71 (YQQGQQPAQQQQSPVQAVPTPAPAPQQQAKRAPVTPLHKPSTTTRNAAPAE). Low complexity predominate over residues 22-54 (QQGQQPAQQQQSPVQAVPTPAPAPQQQAKRAPV).

It belongs to the SepF family. Homodimer. Interacts with FtsZ.

It localises to the cytoplasm. Cell division protein that is part of the divisome complex and is recruited early to the Z-ring. Probably stimulates Z-ring formation, perhaps through the cross-linking of FtsZ protofilaments. Its function overlaps with FtsA. The chain is Cell division protein SepF from Clavibacter michiganensis subsp. michiganensis (strain NCPPB 382).